The following is a 205-amino-acid chain: Ras-related protein Rab-1A (205 aa).

Residues 18-26 (GDSGVGKSC), 36-43 (YTESYIST), 66-70 (DTAGQ), 124-127 (NKSD), and 154-156 (SAK) each bind GTP. Positions 40 to 48 (YISTIGVDF) match the Effector region motif. Residues 183 to 198 (SDSKPSVKINSSTPVS) are compositionally biased toward polar residues. A disordered region spans residues 183-205 (SDSKPSVKINSSTPVSANKGGCC). S-geranylgeranyl cysteine attachment occurs at residues cysteine 204 and cysteine 205.

Belongs to the small GTPase superfamily. Rab family.

It is found in the golgi apparatus. The protein localises to the endoplasmic reticulum. Functionally, probably required for transit of protein from the ER through Golgi compartment. In Lymnaea stagnalis (Great pond snail), this protein is Ras-related protein Rab-1A (RAB1A).